The following is a 156-amino-acid chain: Calmodulin (156 aa).

S2 carries the N-acetylserine modification. 4 consecutive EF-hand domains span residues 15-50 (EQIA…LGQN), 51-86 (PTEA…KMKD), 88-123 (DSEE…LGEK), and 124-156 (LTDE…MTSK). Ca(2+) is bound by residues D28, D30, D32, T34, E39, D64, D66, N68, T70, E75, D101, D103, N105, and E112. K123 bears the N6,N6,N6-trimethyllysine mark. 5 residues coordinate Ca(2+): D137, D139, D141, Q143, and E148.

This sequence belongs to the calmodulin family.

Its function is as follows. Calmodulin mediates the control of a large number of enzymes, ion channels and other proteins by Ca(2+). Among the enzymes to be stimulated by the calmodulin-Ca(2+) complex are a number of protein kinases and phosphatases. In Strongylocentrotus intermedius (Sea urchin), this protein is Calmodulin.